A 184-amino-acid polypeptide reads, in one-letter code: uncharacterized protein (184 aa).

Residues 32–52 are disordered; the sequence is PCPRSRTQGQSRRSETHTISR.

The protein resides in the mitochondrion. This is an uncharacterized protein from Arabidopsis thaliana (Mouse-ear cress).